The chain runs to 736 residues: 1,4-alpha-glucan branching enzyme GlgB (736 aa).

The Nucleophile role is filled by D415. The active-site Proton donor is E468.

The protein belongs to the glycosyl hydrolase 13 family. GlgB subfamily. As to quaternary structure, monomer.

The catalysed reaction is Transfers a segment of a (1-&gt;4)-alpha-D-glucan chain to a primary hydroxy group in a similar glucan chain.. Its pathway is glycan biosynthesis; glycogen biosynthesis. In terms of biological role, catalyzes the formation of the alpha-1,6-glucosidic linkages in glycogen by scission of a 1,4-alpha-linked oligosaccharide from growing alpha-1,4-glucan chains and the subsequent attachment of the oligosaccharide to the alpha-1,6 position. This Rhodopirellula baltica (strain DSM 10527 / NCIMB 13988 / SH1) protein is 1,4-alpha-glucan branching enzyme GlgB.